The chain runs to 67 residues: Large ribosomal subunit protein bL35 (67 aa).

Positions 1–11 (MPKLKTRKAAA) are enriched in basic residues. The tract at residues 1-22 (MPKLKTRKAAAKRFEATGSGKK) is disordered.

This sequence belongs to the bacterial ribosomal protein bL35 family.

This chain is Large ribosomal subunit protein bL35, found in Microcystis aeruginosa (strain NIES-843 / IAM M-2473).